We begin with the raw amino-acid sequence, 152 residues long: Large ribosomal subunit protein bL9 (152 aa).

The protein belongs to the bacterial ribosomal protein bL9 family.

In terms of biological role, binds to the 23S rRNA. The sequence is that of Large ribosomal subunit protein bL9 from Synechococcus sp. (strain CC9605).